The following is a 539-amino-acid chain: Netrin-G1 (539 aa).

An N-terminal signal peptide occupies residues 1–28; that stretch reads MYLSRFLSIHALWVTVSSVMQPYPLVWG. 3 cysteine pairs are disulfide-bonded: cysteine 33–cysteine 50, cysteine 72–cysteine 92, and cysteine 80–cysteine 88. A Laminin N-terminal domain is found at 46 to 296; the sequence is DYMACQPEST…AISDIKVRGR (251 aa). An NGL discriminant loop I region spans residues 80-91; sequence CAMGNPYMCNNE. Asparagine 133 carries N-linked (GlcNAc...) asparagine glycosylation. An intrachain disulfide couples cysteine 182 to cysteine 206. An NGL discriminant loop II region spans residues 208 to 214; that stretch reads EEYSTGY. The tract at residues 273 to 275 is NGL discriminant loop III; sequence EIF. Cystine bridges form between cysteine 297/cysteine 306, cysteine 299/cysteine 315, cysteine 317/cysteine 326, cysteine 329/cysteine 354, cysteine 364/cysteine 373, cysteine 366/cysteine 384, cysteine 387/cysteine 396, cysteine 399/cysteine 417, cysteine 420/cysteine 432, cysteine 422/cysteine 438, cysteine 440/cysteine 449, cysteine 452/cysteine 462, cysteine 467/cysteine 480, cysteine 474/cysteine 486, and cysteine 488/cysteine 497. Laminin EGF-like domains lie at 297–356, 364–419, and 420–469; these read CKCN…TCIP, CECF…VCIE, and CYCN…VCDN. Asparagine 320 carries N-linked (GlcNAc...) asparagine glycosylation. The N-linked (GlcNAc...) asparagine glycan is linked to asparagine 406. N-linked (GlcNAc...) asparagine glycosylation is present at asparagine 433. The GPI-anchor amidated serine moiety is linked to residue serine 510. The propeptide at 511-539 is removed in mature form; the sequence is DSGQGAPPHGSPALLLLTTLLGTASPLVF.

In terms of assembly, interacts with NGL1. Post-translationally, N-glycosylated. Highly expressed in the thalamus, with very low expression, if any, in other tissues.

The protein localises to the cell membrane. Functionally, involved in controlling patterning and neuronal circuit formation at the laminar, cellular, subcellular and synaptic levels. Promotes neurite outgrowth of both axons and dendrites. The protein is Netrin-G1 (NTNG1) of Homo sapiens (Human).